The primary structure comprises 118 residues: MARVKRGVIARTRHKKILKQAKGYYGARSRVYRVAFQAVIKAGQYAYRDRRQRKRQFRQLWIARINAAARQNGISYSKFINGLKKASVEIDRKILADIAVFDKVAFTALVEKAKAALA.

The protein belongs to the bacterial ribosomal protein bL20 family.

Functionally, binds directly to 23S ribosomal RNA and is necessary for the in vitro assembly process of the 50S ribosomal subunit. It is not involved in the protein synthesizing functions of that subunit. In Shigella dysenteriae serotype 1 (strain Sd197), this protein is Large ribosomal subunit protein bL20.